A 245-amino-acid polypeptide reads, in one-letter code: NAD(P)H-hydrate epimerase (245 aa).

Positions 21–221 constitute a YjeF N-terminal domain; sequence MREIDRLAVQ…DLGIPPAVYT (201 aa). Residue 72 to 76 participates in (6S)-NADPHX binding; it reads GNGGG. K(+) is bound by residues Asn-73 and Asp-135. (6S)-NADPHX-binding positions include 139–145 and Asp-168; that span reads GYSLLGA. Ser-171 contacts K(+).

The protein belongs to the NnrE/AIBP family. The cofactor is K(+).

It catalyses the reaction (6R)-NADHX = (6S)-NADHX. It carries out the reaction (6R)-NADPHX = (6S)-NADPHX. Functionally, catalyzes the epimerization of the S- and R-forms of NAD(P)HX, a damaged form of NAD(P)H that is a result of enzymatic or heat-dependent hydration. This is a prerequisite for the S-specific NAD(P)H-hydrate dehydratase to allow the repair of both epimers of NAD(P)HX. The protein is NAD(P)H-hydrate epimerase of Dehalogenimonas lykanthroporepellens (strain ATCC BAA-1523 / JCM 15061 / BL-DC-9).